The chain runs to 199 residues: dTTP/UTP pyrophosphatase (199 aa).

D73 functions as the Proton acceptor in the catalytic mechanism.

It belongs to the Maf family. YhdE subfamily. A divalent metal cation is required as a cofactor.

The protein localises to the cytoplasm. The catalysed reaction is dTTP + H2O = dTMP + diphosphate + H(+). It catalyses the reaction UTP + H2O = UMP + diphosphate + H(+). In terms of biological role, nucleoside triphosphate pyrophosphatase that hydrolyzes dTTP and UTP. May have a dual role in cell division arrest and in preventing the incorporation of modified nucleotides into cellular nucleic acids. The protein is dTTP/UTP pyrophosphatase of Caldicellulosiruptor bescii (strain ATCC BAA-1888 / DSM 6725 / KCTC 15123 / Z-1320) (Anaerocellum thermophilum).